A 658-amino-acid chain; its full sequence is Squalene--hopene cyclase (658 aa).

The stretch at 69–110 is one PFTB 1 repeat; sequence EAKIGRYLRRIQGEHGGWSLFYGGDLDLSATVKAYFALKMIG. The active-site Proton donor is the Asp392. 3 PFTB repeats span residues 418–459, 486–526, and 534–584; these read KARA…GALL, MKAA…NVAA, and IQKA…GLMA.

Belongs to the terpene cyclase/mutase family.

The protein resides in the cell membrane. It carries out the reaction squalene = hop-22(29)-ene. The catalysed reaction is squalene + H2O = hopan-22-ol. The protein operates within secondary metabolite biosynthesis; hopanoid biosynthesis. Its function is as follows. Catalyzes the cyclization of squalene into hopene. The protein is Squalene--hopene cyclase (shc) of Zymomonas mobilis subsp. mobilis (strain ATCC 31821 / ZM4 / CP4).